A 517-amino-acid chain; its full sequence is L-amino-acid oxidase (517 aa).

The signal sequence occupies residues 1–18 (MNVFFMFSLLFLAALGSC). Cysteines 29 and 192 form a disulfide. FAD is bound by residues 62–63 (MA), 82–83 (EA), R90, and 106–109 (GPMR). R109 is a binding site for substrate. N191 carries an N-linked (GlcNAc...) asparagine glycan. FAD is bound at residue V280. Cysteines 350 and 431 form a disulfide. Y391 is a binding site for substrate. Residues E476 and 483 to 488 (GWLDST) each bind FAD. 483–484 (GW) provides a ligand contact to substrate.

Belongs to the flavin monoamine oxidase family. FIG1 subfamily. In terms of assembly, homodimer; non-covalently linked. FAD is required as a cofactor. Post-translationally, N-glycosylated. In terms of tissue distribution, expressed by the venom gland.

It is found in the secreted. It catalyses the reaction an L-alpha-amino acid + O2 + H2O = a 2-oxocarboxylate + H2O2 + NH4(+). Its function is as follows. Catalyzes an oxidative deamination of predominantly hydrophobic and aromatic L-amino acids, thus producing hydrogen peroxide that may contribute to the diverse toxic effects of this enzyme. Exhibits diverse biological activities, such as hemorrhage, hemolysis, edema, apoptosis of vascular endothelial cells or tumor cell lines, antiparasitic activities, as well as regulation of platelet aggregation. Effects of snake L-amino oxidases on platelets are controversial, since they either induce aggregation or inhibit agonist-induced aggregation. These different effects are probably due to different experimental conditions. This protein has antibacterial activities. The protein is L-amino-acid oxidase of Pseudechis australis (Mulga snake).